The following is a 347-amino-acid chain: Protein YIPF1 homolog (347 aa).

Positions 1 to 115 (MSNYNNKHHD…FSDNVPLNTN (115 aa)) are disordered. Topologically, residues 1–166 (MSNYNNKHHD…FFNLIRENPD (166 aa)) are cytoplasmic. Over residues 34–47 (NLFPNTNIDYNDYT) the composition is skewed to polar residues. 2 stretches are compositionally biased toward low complexity: residues 48–67 (QNRG…LQFQ) and 76–104 (NSNT…SSNN). A compositionally biased stretch (polar residues) spans 105–115 (KFSDNVPLNTN). Residues 167-187 (LYGPFWVLTSLVFIVAVTSNL) traverse the membrane as a helical segment. The Lumenal portion of the chain corresponds to 188–207 (NEYFHSSDHKSWEVDIQKIV). A helical transmembrane segment spans residues 208 to 228 (YSAITIYGYSFVIPLILWGIF). At 229–232 (KWMN) the chain is on the cytoplasmic side. The helical transmembrane segment at 233–253 (LGLRLLDMLCIYGYTLFIFVP) threads the bilayer. The Lumenal portion of the chain corresponds to 254–255 (AS). A helical membrane pass occupies residues 256–276 (ILCVIPLQLVQWIIVAIASIV). At 277 to 296 (SGLFLVTNIFTPLKEDFTKR) the chain is on the cytoplasmic side. A helical transmembrane segment spans residues 297–317 (GLIICAVIGALHIGLALVLKL). The Lumenal portion of the chain corresponds to 318–347 (YFFANSTENFTISDSSSTPTPTPTNTTKLL). 3 N-linked (GlcNAc...) asparagine glycosylation sites follow: Asn-322, Asn-326, and Asn-342.

This sequence belongs to the YIP1 family.

The protein resides in the golgi apparatus. Its subcellular location is the cis-Golgi network membrane. The protein localises to the trans-Golgi network membrane. It localises to the late endosome membrane. In Dictyostelium discoideum (Social amoeba), this protein is Protein YIPF1 homolog (yipf1).